The following is a 1248-amino-acid chain: Probable serine/threonine-protein kinase DDB_G0278509 (1248 aa).

5 disordered regions span residues Met-1–Tyr-26, Ser-40–Tyr-61, Gln-100–Glu-125, Gln-180–Asn-220, and Ser-235–Lys-338. A compositionally biased stretch (polar residues) spans Tyr-102–Gln-117. A compositionally biased stretch (low complexity) spans Asn-181–Asn-216. LRR repeat units follow at residues Ser-386–Glu-407, Gly-411–Asn-432, Asn-435–Lys-457, His-458–Ser-480, Phe-481–Tyr-502, Asn-503–Pro-524, Gln-527–Thr-548, Asn-572–Leu-593, Lys-595–Ser-616, Arg-619–Ser-641, Ser-642–Leu-663, Asn-665–Thr-687, and Lys-688–Lys-708. Residues Tyr-825–Ser-873 are disordered. A compositionally biased stretch (basic and acidic residues) spans Ser-845–Asp-858. Residues Thr-860–Ser-873 show a composition bias toward low complexity. The 294-residue stretch at Ile-946–Met-1239 folds into the Protein kinase domain. ATP contacts are provided by residues Ile-952–Val-960 and Lys-973. Asp-1069 functions as the Proton acceptor in the catalytic mechanism. The segment at Asn-1106–Thr-1135 is disordered.

The protein belongs to the protein kinase superfamily. TKL Ser/Thr protein kinase family.

It catalyses the reaction L-seryl-[protein] + ATP = O-phospho-L-seryl-[protein] + ADP + H(+). The catalysed reaction is L-threonyl-[protein] + ATP = O-phospho-L-threonyl-[protein] + ADP + H(+). This chain is Probable serine/threonine-protein kinase DDB_G0278509, found in Dictyostelium discoideum (Social amoeba).